Reading from the N-terminus, the 100-residue chain is Small ribosomal subunit protein uS14c (100 aa).

The protein belongs to the universal ribosomal protein uS14 family. As to quaternary structure, part of the 30S ribosomal subunit.

It is found in the plastid. In terms of biological role, binds 16S rRNA, required for the assembly of 30S particles. The chain is Small ribosomal subunit protein uS14c from Cuscuta exaltata (Tall dodder).